The chain runs to 343 residues: Heat-inducible transcription repressor HrcA (343 aa).

The protein belongs to the HrcA family.

Functionally, negative regulator of class I heat shock genes (grpE-dnaK-dnaJ and groELS operons). Prevents heat-shock induction of these operons. The sequence is that of Heat-inducible transcription repressor HrcA from Lysinibacillus sphaericus (Bacillus sphaericus).